The sequence spans 196 residues: Hibernation-associated plasma protein HP-20 (196 aa).

An N-terminal signal peptide occupies residues 1–23; that stretch reads MTDVWRLAIFVLMVNVLNDQVSC. In terms of domain architecture, Collagen-like spans 25-63; sequence GPPGPVGYPGVPGVPGPRGPPGQPGAAGRPGDPGPKGPS. The segment covering 28 to 47 has biased composition (pro residues); it reads GPVGYPGVPGVPGPRGPPGQ. The tract at residues 28–64 is disordered; sequence GPVGYPGVPGVPGPRGPPGQPGAAGRPGDPGPKGPSV. The C1q domain occupies 67–196; the sequence is PCRERSAFTV…IYFSGFLISS (130 aa).

Plasma; synthesized in the liver.

Its subcellular location is the secreted. Functionally, plasma proteins HP-20, HP-25, HP-27 and HP-55 form a 140 kDa complex via disulfide bonds in the plasma and are hibernation specific. The sequence is that of Hibernation-associated plasma protein HP-20 from Tamias sibiricus (Siberian chipmunk).